The sequence spans 390 residues: Branched-chain-amino-acid aminotransferase (390 aa).

Lys225 bears the N6-(pyridoxal phosphate)lysine mark.

It belongs to the class-IV pyridoxal-phosphate-dependent aminotransferase family. In terms of assembly, homodimer. Pyridoxal 5'-phosphate serves as cofactor.

It carries out the reaction L-leucine + 2-oxoglutarate = 4-methyl-2-oxopentanoate + L-glutamate. It catalyses the reaction L-isoleucine + 2-oxoglutarate = (S)-3-methyl-2-oxopentanoate + L-glutamate. The enzyme catalyses L-valine + 2-oxoglutarate = 3-methyl-2-oxobutanoate + L-glutamate. In terms of biological role, catalyzes the first reaction in the catabolism of the essential branched chain amino acids leucine, isoleucine, and valine. The protein is Branched-chain-amino-acid aminotransferase of Monosiga brevicollis (Choanoflagellate).